The following is a 303-amino-acid chain: Ribosomal protein L11 methyltransferase (303 aa).

T152, G173, D195, and N239 together coordinate S-adenosyl-L-methionine.

Belongs to the methyltransferase superfamily. PrmA family.

It is found in the cytoplasm. It carries out the reaction L-lysyl-[protein] + 3 S-adenosyl-L-methionine = N(6),N(6),N(6)-trimethyl-L-lysyl-[protein] + 3 S-adenosyl-L-homocysteine + 3 H(+). In terms of biological role, methylates ribosomal protein L11. The chain is Ribosomal protein L11 methyltransferase from Desulforapulum autotrophicum (strain ATCC 43914 / DSM 3382 / VKM B-1955 / HRM2) (Desulfobacterium autotrophicum).